The following is a 260-amino-acid chain: WUSCHEL-related homeobox 2 (260 aa).

Positions 10 to 74 (ASSSRWNPTK…NHKARQRQKQ (65 aa)) form a DNA-binding region, homeobox; WUS-type.

The protein belongs to the WUS homeobox family.

It localises to the nucleus. Its function is as follows. Probable transcription factor involved in embryonic patterning. Required for apical embryo development after fertilization. Its specific localization to the apical daughter cell of the zygote, while WOX8 is confined to the basal cell, suggests that the asymmetric division of the plant zygote separates determinants of apical and basal cell fates. The sequence is that of WUSCHEL-related homeobox 2 (WOX2) from Arabidopsis thaliana (Mouse-ear cress).